A 486-amino-acid chain; its full sequence is MKFVIKLFPEIMIKSESVRKRFVKILTGNIRNVLNKYDDGVAVVKHWDYIEVRSKNEENRAILIDVLGRIPGIHHFLEVDEKPFTDMHDIFEQTLADVGASLENKTFCVRVKRKGKHEFSSLDVERYVGGGLNQAIETAKVKLSNPDVTVRIDIENDHMMLIKARHEGIGGYPIGTQEDVLSLISGGFDSGVSSYMFIRRGSRVHYCFFNLGGAAHEIGVKQMAYHIWNRYSGSHKVRFVAINFENVVGEILEKIDNGQMGVVLKRMMVRAASKVAERFGIQAIVTGEALGQVSSQTLTNLRLIDEAASALVLRPLITHDKEAIIAMAKQIGTDDIAKSMPEFCGVISKNPTVKAIKEKIEKEELNFNFDVLESAVQNAQYLDIRQIAEQTEKDVVKVDTVSVLSANDVILDIRSPEEHDERPFELAGHEVKHLPFYKLSSQFGDLDQSKNYVLYCERGVMSKLQALYLKENGFANVRVFAHGNIN.

The 105-residue stretch at 61–165 folds into the THUMP domain; the sequence is AILIDVLGRI…NDHMMLIKAR (105 aa). Residues 183 to 184, Lys265, Gly287, and Gln296 contribute to the ATP site; that span reads LI. A disulfide bridge connects residues Cys344 and Cys456. Residues 404 to 481 form the Rhodanese domain; it reads LSANDVILDI…NGFANVRVFA (78 aa). Residue Cys456 is the Cysteine persulfide intermediate of the active site.

This sequence belongs to the ThiI family.

The protein resides in the cytoplasm. It carries out the reaction [ThiI sulfur-carrier protein]-S-sulfanyl-L-cysteine + a uridine in tRNA + 2 reduced [2Fe-2S]-[ferredoxin] + ATP + H(+) = [ThiI sulfur-carrier protein]-L-cysteine + a 4-thiouridine in tRNA + 2 oxidized [2Fe-2S]-[ferredoxin] + AMP + diphosphate. The enzyme catalyses [ThiS sulfur-carrier protein]-C-terminal Gly-Gly-AMP + S-sulfanyl-L-cysteinyl-[cysteine desulfurase] + AH2 = [ThiS sulfur-carrier protein]-C-terminal-Gly-aminoethanethioate + L-cysteinyl-[cysteine desulfurase] + A + AMP + 2 H(+). The protein operates within cofactor biosynthesis; thiamine diphosphate biosynthesis. Its function is as follows. Catalyzes the ATP-dependent transfer of a sulfur to tRNA to produce 4-thiouridine in position 8 of tRNAs, which functions as a near-UV photosensor. Also catalyzes the transfer of sulfur to the sulfur carrier protein ThiS, forming ThiS-thiocarboxylate. This is a step in the synthesis of thiazole, in the thiamine biosynthesis pathway. The sulfur is donated as persulfide by IscS. This is tRNA sulfurtransferase from Mannheimia succiniciproducens (strain KCTC 0769BP / MBEL55E).